Consider the following 227-residue polypeptide: Broad specificity amino-acid racemase RacX (227 aa).

51–53 (DRP) is a binding site for substrate. C82 functions as the Proton donor/acceptor in the catalytic mechanism. Residues 83-85 (NTA) and K161 each bind substrate. C191 functions as the Proton donor/acceptor in the catalytic mechanism.

The protein belongs to the aspartate/glutamate racemases family. As to quaternary structure, homodimer.

It catalyses the reaction an L-alpha-amino acid = a D-alpha-amino acid. The enzyme catalyses (2S,6S)-2,6-diaminopimelate = meso-2,6-diaminopimelate. The catalysed reaction is L-lysine = D-lysine. It carries out the reaction L-arginine = D-arginine. It catalyses the reaction L-ornithine = D-ornithine. The enzyme catalyses L-histidine = D-histidine. The catalysed reaction is L-alanine = D-alanine. It carries out the reaction L-tyrosine = D-tyrosine. It catalyses the reaction L-phenylalanine = D-phenylalanine. The enzyme catalyses L-serine = D-serine. The catalysed reaction is L-glutamine = D-glutamine. It carries out the reaction L-methionine = D-methionine. It catalyses the reaction L-asparagine = D-asparagine. The enzyme catalyses L-homoserine = D-homoserine. Its function is as follows. Amino-acid racemase able to utilize a broad range of substrates. Preferentially catalyzes the epimerization of LL-diaminopimelate, as well as the racemization of D-lysine, L-arginine, L-ornithine, L-lysine and D-arginine. Has lower activity against D-ornithine, L-histidine, L-alanine, L-tyrosine, L-phenylalanine, L-serine, L-glutamine, L-methionine, L-asparagine and L-homoserine. Has weak activity against L-norleucine, L-aminobutyric acid and L-norvaline. Has no activity toward nine L-amino acids (Thr, Glu, Asp, Val, Leu, Ile, Trp, Cit and Aad). D-amino acids might be used as components of peptidoglycan and/or be involved in peptidoglycan metabolism and remodeling. The protein is Broad specificity amino-acid racemase RacX (racX) of Bacillus subtilis (strain 168).